The primary structure comprises 459 residues: Bifunctional protein GlmU (459 aa).

The tract at residues Met1–Arg229 is pyrophosphorylase. UDP-N-acetyl-alpha-D-glucosamine is bound by residues Leu8–Gly11, Lys22, Gln72, and Gly77–Thr78. Asp102 lines the Mg(2+) pocket. UDP-N-acetyl-alpha-D-glucosamine-binding residues include Gly139, Glu154, Asn169, and Asn227. Asn227 is a Mg(2+) binding site. A linker region spans residues Val230 to Asn250. The interval Gly251–Gln459 is N-acetyltransferase. UDP-N-acetyl-alpha-D-glucosamine is bound by residues Arg332 and Lys350. Residue His362 is the Proton acceptor of the active site. Tyr365 and Asn376 together coordinate UDP-N-acetyl-alpha-D-glucosamine. Acetyl-CoA is bound by residues Ala379, Asn385 to Tyr386, Ser404, Ala422, and Arg439.

This sequence in the N-terminal section; belongs to the N-acetylglucosamine-1-phosphate uridyltransferase family. It in the C-terminal section; belongs to the transferase hexapeptide repeat family. As to quaternary structure, homotrimer. Mg(2+) serves as cofactor.

The protein resides in the cytoplasm. The enzyme catalyses alpha-D-glucosamine 1-phosphate + acetyl-CoA = N-acetyl-alpha-D-glucosamine 1-phosphate + CoA + H(+). It catalyses the reaction N-acetyl-alpha-D-glucosamine 1-phosphate + UTP + H(+) = UDP-N-acetyl-alpha-D-glucosamine + diphosphate. The protein operates within nucleotide-sugar biosynthesis; UDP-N-acetyl-alpha-D-glucosamine biosynthesis; N-acetyl-alpha-D-glucosamine 1-phosphate from alpha-D-glucosamine 6-phosphate (route II): step 2/2. It functions in the pathway nucleotide-sugar biosynthesis; UDP-N-acetyl-alpha-D-glucosamine biosynthesis; UDP-N-acetyl-alpha-D-glucosamine from N-acetyl-alpha-D-glucosamine 1-phosphate: step 1/1. Its pathway is bacterial outer membrane biogenesis; LPS lipid A biosynthesis. Catalyzes the last two sequential reactions in the de novo biosynthetic pathway for UDP-N-acetylglucosamine (UDP-GlcNAc). The C-terminal domain catalyzes the transfer of acetyl group from acetyl coenzyme A to glucosamine-1-phosphate (GlcN-1-P) to produce N-acetylglucosamine-1-phosphate (GlcNAc-1-P), which is converted into UDP-GlcNAc by the transfer of uridine 5-monophosphate (from uridine 5-triphosphate), a reaction catalyzed by the N-terminal domain. This chain is Bifunctional protein GlmU, found in Streptococcus pneumoniae serotype 2 (strain D39 / NCTC 7466).